The sequence spans 341 residues: N-acetyl-gamma-glutamyl-phosphate reductase (341 aa).

Residue Cys145 is part of the active site.

It belongs to the NAGSA dehydrogenase family. Type 1 subfamily.

The protein resides in the cytoplasm. The enzyme catalyses N-acetyl-L-glutamate 5-semialdehyde + phosphate + NADP(+) = N-acetyl-L-glutamyl 5-phosphate + NADPH + H(+). It functions in the pathway amino-acid biosynthesis; L-arginine biosynthesis; N(2)-acetyl-L-ornithine from L-glutamate: step 3/4. In terms of biological role, catalyzes the NADPH-dependent reduction of N-acetyl-5-glutamyl phosphate to yield N-acetyl-L-glutamate 5-semialdehyde. The polypeptide is N-acetyl-gamma-glutamyl-phosphate reductase (Streptomyces clavuligerus).